A 341-amino-acid chain; its full sequence is N-acetyl-gamma-glutamyl-phosphate reductase (341 aa).

Cys-147 is an active-site residue.

It belongs to the NAGSA dehydrogenase family. Type 1 subfamily.

The protein localises to the cytoplasm. It carries out the reaction N-acetyl-L-glutamate 5-semialdehyde + phosphate + NADP(+) = N-acetyl-L-glutamyl 5-phosphate + NADPH + H(+). It functions in the pathway amino-acid biosynthesis; L-arginine biosynthesis; N(2)-acetyl-L-ornithine from L-glutamate: step 3/4. In terms of biological role, catalyzes the NADPH-dependent reduction of N-acetyl-5-glutamyl phosphate to yield N-acetyl-L-glutamate 5-semialdehyde. The protein is N-acetyl-gamma-glutamyl-phosphate reductase of Dehalococcoides mccartyi (strain ATCC BAA-2266 / KCTC 15142 / 195) (Dehalococcoides ethenogenes (strain 195)).